Consider the following 427-residue polypeptide: Glutamate-1-semialdehyde 2,1-aminomutase (427 aa).

Residue K265 is modified to N6-(pyridoxal phosphate)lysine.

The protein belongs to the class-III pyridoxal-phosphate-dependent aminotransferase family. HemL subfamily. As to quaternary structure, homodimer. The cofactor is pyridoxal 5'-phosphate.

It is found in the cytoplasm. It catalyses the reaction (S)-4-amino-5-oxopentanoate = 5-aminolevulinate. It functions in the pathway porphyrin-containing compound metabolism; protoporphyrin-IX biosynthesis; 5-aminolevulinate from L-glutamyl-tRNA(Glu): step 2/2. This Pseudomonas fluorescens (strain SBW25) protein is Glutamate-1-semialdehyde 2,1-aminomutase.